The sequence spans 118 residues: DNA-binding protein SSO0352 (118 aa).

Belongs to the PDCD5 family.

The sequence is that of DNA-binding protein SSO0352 from Saccharolobus solfataricus (strain ATCC 35092 / DSM 1617 / JCM 11322 / P2) (Sulfolobus solfataricus).